Here is a 440-residue protein sequence, read N- to C-terminus: Thymidine phosphorylase (440 aa).

This sequence belongs to the thymidine/pyrimidine-nucleoside phosphorylase family. In terms of assembly, homodimer.

The enzyme catalyses thymidine + phosphate = 2-deoxy-alpha-D-ribose 1-phosphate + thymine. It functions in the pathway pyrimidine metabolism; dTMP biosynthesis via salvage pathway; dTMP from thymine: step 1/2. Its function is as follows. The enzymes which catalyze the reversible phosphorolysis of pyrimidine nucleosides are involved in the degradation of these compounds and in their utilization as carbon and energy sources, or in the rescue of pyrimidine bases for nucleotide synthesis. This Shigella flexneri serotype 5b (strain 8401) protein is Thymidine phosphorylase.